Consider the following 283-residue polypeptide: Bis(5'-nucleosyl)-tetraphosphatase, symmetrical (283 aa).

This sequence belongs to the Ap4A hydrolase family.

The catalysed reaction is P(1),P(4)-bis(5'-adenosyl) tetraphosphate + H2O = 2 ADP + 2 H(+). Its function is as follows. Hydrolyzes diadenosine 5',5'''-P1,P4-tetraphosphate to yield ADP. In Serratia proteamaculans (strain 568), this protein is Bis(5'-nucleosyl)-tetraphosphatase, symmetrical.